A 155-amino-acid chain; its full sequence is SsrA-binding protein (155 aa).

This sequence belongs to the SmpB family.

Its subcellular location is the cytoplasm. Required for rescue of stalled ribosomes mediated by trans-translation. Binds to transfer-messenger RNA (tmRNA), required for stable association of tmRNA with ribosomes. tmRNA and SmpB together mimic tRNA shape, replacing the anticodon stem-loop with SmpB. tmRNA is encoded by the ssrA gene; the 2 termini fold to resemble tRNA(Ala) and it encodes a 'tag peptide', a short internal open reading frame. During trans-translation Ala-aminoacylated tmRNA acts like a tRNA, entering the A-site of stalled ribosomes, displacing the stalled mRNA. The ribosome then switches to translate the ORF on the tmRNA; the nascent peptide is terminated with the 'tag peptide' encoded by the tmRNA and targeted for degradation. The ribosome is freed to recommence translation, which seems to be the essential function of trans-translation. The polypeptide is SsrA-binding protein (Bordetella parapertussis (strain 12822 / ATCC BAA-587 / NCTC 13253)).